The primary structure comprises 684 residues: Homoaconitase, mitochondrial (684 aa).

[4Fe-4S] cluster-binding residues include Cys-337, Cys-397, and Cys-400.

The protein belongs to the aconitase/IPM isomerase family. [4Fe-4S] cluster is required as a cofactor.

The protein resides in the mitochondrion. The enzyme catalyses (2R,3S)-homoisocitrate = cis-homoaconitate + H2O. It functions in the pathway amino-acid biosynthesis; L-lysine biosynthesis via AAA pathway; L-alpha-aminoadipate from 2-oxoglutarate: step 3/5. Functionally, catalyzes the reversible hydration of cis-homoaconitate to (2R,3S)-homoisocitrate, a step in the alpha-aminoadipate pathway for lysine biosynthesis. The sequence is that of Homoaconitase, mitochondrial (LYS4) from Candida albicans (strain SC5314 / ATCC MYA-2876) (Yeast).